We begin with the raw amino-acid sequence, 874 residues long: Bifunctional apolipoprotein N-acyltransferase/polyprenol monophosphomannose synthase (874 aa).

The interval 1–593 (MKLGAWVAAQ…GRHRATSRSY (593 aa)) is apolipoprotein N-acyltransferase. Transmembrane regions (helical) follow at residues 23 to 42 (TRLV…FPPR), 72 to 89 (YGLL…PWIG), 94 to 115 (PGPW…GLFA), 177 to 194 (VALV…IEKW), and 206 to 223 (AVVL…AAIV). Residues 241–497 (VTVAVVQGNV…PAYLDSQVRL (257 aa)) form the CN hydrolase domain. Glu-294 serves as the catalytic Proton acceptor. The active site involves Lys-359. The active-site Nucleophile is Cys-409. The helical transmembrane segment at 509-526 (PILQWILVGAAAAVVLVA) threads the bilayer. 2 disordered regions span residues 533–609 (FPRP…NRPS) and 852–874 (RARP…DVTE). The segment at 594–874 (MTTGQPAPPA…SRVSRADVTE (281 aa)) is polyprenol monophosphomannose synthase.

In the N-terminal section; belongs to the CN hydrolase family. Apolipoprotein N-acyltransferase subfamily. The protein in the C-terminal section; belongs to the glycosyltransferase 2 family.

The protein resides in the cell membrane. It carries out the reaction N-terminal S-1,2-diacyl-sn-glyceryl-L-cysteinyl-[lipoprotein] + a glycerophospholipid = N-acyl-S-1,2-diacyl-sn-glyceryl-L-cysteinyl-[lipoprotein] + a 2-acyl-sn-glycero-3-phospholipid + H(+). The catalysed reaction is a di-trans,poly-cis-dolichyl phosphate + GDP-alpha-D-mannose = a di-trans,poly-cis-dolichyl beta-D-mannosyl phosphate + GDP. The protein operates within protein modification; lipoprotein biosynthesis (N-acyl transfer). Its function is as follows. Catalyzes the phospholipid dependent N-acylation of the N-terminal cysteine of apolipoprotein, the last step in lipoprotein maturation. In terms of biological role, transfers mannose from GDP-mannose to lipid acceptors to form polyprenol monophosphomannose (PPM). PMM is an alkai-stable sugar donor which adds mannose-phosphate residues to triacylated-phosphatidyl-myo-inositol mannosides (PIM2), eventually leading to generation of the cell wall glycolipid lipoglycan modulins lipoarabinomannan (LAM) and lipomannan (LM). This chain is Bifunctional apolipoprotein N-acyltransferase/polyprenol monophosphomannose synthase, found in Mycobacterium bovis (strain BCG / Pasteur 1173P2).